A 193-amino-acid polypeptide reads, in one-letter code: Fe/S biogenesis protein NfuA (193 aa).

[4Fe-4S] cluster-binding residues include Cys-151 and Cys-154.

Belongs to the NfuA family. As to quaternary structure, homodimer. Requires [4Fe-4S] cluster as cofactor.

Functionally, involved in iron-sulfur cluster biogenesis. Binds a 4Fe-4S cluster, can transfer this cluster to apoproteins, and thereby intervenes in the maturation of Fe/S proteins. Could also act as a scaffold/chaperone for damaged Fe/S proteins. This chain is Fe/S biogenesis protein NfuA, found in Buchnera aphidicola subsp. Cinara cedri (strain Cc).